Consider the following 94-residue polypeptide: Large ribosomal subunit protein bL28A (94 aa).

The segment at 63 to 94 (GHRGRRRAARAGSAPAHFARQAGSSLRTAAIL) is disordered. The segment covering 72–82 (RAGSAPAHFAR) has biased composition (low complexity). The span at 84 to 94 (AGSSLRTAAIL) shows a compositional bias: polar residues.

This sequence belongs to the bacterial ribosomal protein bL28 family.

The protein is Large ribosomal subunit protein bL28A (rpmB1) of Mycobacterium bovis (strain ATCC BAA-935 / AF2122/97).